The following is a 248-amino-acid chain: 4-hydroxy-tetrahydrodipicolinate reductase (248 aa).

NAD(+) contacts are provided by residues 9-14, 77-79, and 104-107; these read GAKGRV, GTT, and APNF. His-134 acts as the Proton donor/acceptor in catalysis. A (S)-2,3,4,5-tetrahydrodipicolinate-binding site is contributed by His-135. Lys-138 acts as the Proton donor in catalysis. 144–145 provides a ligand contact to (S)-2,3,4,5-tetrahydrodipicolinate; the sequence is GT.

The protein belongs to the DapB family.

The protein resides in the cytoplasm. The enzyme catalyses (S)-2,3,4,5-tetrahydrodipicolinate + NAD(+) + H2O = (2S,4S)-4-hydroxy-2,3,4,5-tetrahydrodipicolinate + NADH + H(+). It carries out the reaction (S)-2,3,4,5-tetrahydrodipicolinate + NADP(+) + H2O = (2S,4S)-4-hydroxy-2,3,4,5-tetrahydrodipicolinate + NADPH + H(+). It functions in the pathway amino-acid biosynthesis; L-lysine biosynthesis via DAP pathway; (S)-tetrahydrodipicolinate from L-aspartate: step 4/4. Functionally, catalyzes the conversion of 4-hydroxy-tetrahydrodipicolinate (HTPA) to tetrahydrodipicolinate. This is 4-hydroxy-tetrahydrodipicolinate reductase from Corynebacterium efficiens (strain DSM 44549 / YS-314 / AJ 12310 / JCM 11189 / NBRC 100395).